Reading from the N-terminus, the 346-residue chain is Biotin synthase (346 aa).

Positions 40 to 264 (NEVQVSTLLS…MMPHSHVRLS (225 aa)) constitute a Radical SAM core domain. Residues Cys55, Cys59, and Cys62 each coordinate [4Fe-4S] cluster. [2Fe-2S] cluster is bound by residues Cys99, Cys130, Cys190, and Arg262.

It belongs to the radical SAM superfamily. Biotin synthase family. As to quaternary structure, homodimer. It depends on [4Fe-4S] cluster as a cofactor. The cofactor is [2Fe-2S] cluster.

It catalyses the reaction (4R,5S)-dethiobiotin + (sulfur carrier)-SH + 2 reduced [2Fe-2S]-[ferredoxin] + 2 S-adenosyl-L-methionine = (sulfur carrier)-H + biotin + 2 5'-deoxyadenosine + 2 L-methionine + 2 oxidized [2Fe-2S]-[ferredoxin]. Its pathway is cofactor biosynthesis; biotin biosynthesis; biotin from 7,8-diaminononanoate: step 2/2. In terms of biological role, catalyzes the conversion of dethiobiotin (DTB) to biotin by the insertion of a sulfur atom into dethiobiotin via a radical-based mechanism. The chain is Biotin synthase from Colwellia psychrerythraea (strain 34H / ATCC BAA-681) (Vibrio psychroerythus).